The chain runs to 181 residues: Peptide deformylase (181 aa).

Fe cation contacts are provided by C104 and H146. E147 is an active-site residue. H150 is a binding site for Fe cation.

This sequence belongs to the polypeptide deformylase family. The cofactor is Fe(2+).

It carries out the reaction N-terminal N-formyl-L-methionyl-[peptide] + H2O = N-terminal L-methionyl-[peptide] + formate. Removes the formyl group from the N-terminal Met of newly synthesized proteins. Requires at least a dipeptide for an efficient rate of reaction. N-terminal L-methionine is a prerequisite for activity but the enzyme has broad specificity at other positions. The chain is Peptide deformylase from Helicobacter hepaticus (strain ATCC 51449 / 3B1).